The primary structure comprises 156 residues: Small ribosomal subunit protein uS7 (156 aa).

It belongs to the universal ribosomal protein uS7 family. Part of the 30S ribosomal subunit. Contacts proteins S9 and S11.

Functionally, one of the primary rRNA binding proteins, it binds directly to 16S rRNA where it nucleates assembly of the head domain of the 30S subunit. Is located at the subunit interface close to the decoding center, probably blocks exit of the E-site tRNA. In Clostridium tetani (strain Massachusetts / E88), this protein is Small ribosomal subunit protein uS7.